The chain runs to 136 residues: Large ribosomal subunit protein uL16 (136 aa).

This sequence belongs to the universal ribosomal protein uL16 family. As to quaternary structure, part of the 50S ribosomal subunit.

Its function is as follows. Binds 23S rRNA and is also seen to make contacts with the A and possibly P site tRNAs. In Pelagibacter ubique (strain HTCC1062), this protein is Large ribosomal subunit protein uL16.